Reading from the N-terminus, the 176-residue chain is MEKAILGGGCFWCLEAAFSQLKGVERVVSGYCGGHTDSPDYRQVCSGDSGHVEVVEISYDPALIDYATLLQVFFAVHDPTTLNRQGHDVGTQYASAIFYLDETQRECARRVIAQLDAEQIFDAPIVTRVESAPRFHPAEDYHQNYYAQNQQQNYCQLVISPKLAKIRRRFSHLLQN.

Cysteine 10 is an active-site residue.

This sequence belongs to the MsrA Met sulfoxide reductase family.

The catalysed reaction is L-methionyl-[protein] + [thioredoxin]-disulfide + H2O = L-methionyl-(S)-S-oxide-[protein] + [thioredoxin]-dithiol. It catalyses the reaction [thioredoxin]-disulfide + L-methionine + H2O = L-methionine (S)-S-oxide + [thioredoxin]-dithiol. Its function is as follows. Has an important function as a repair enzyme for proteins that have been inactivated by oxidation. Catalyzes the reversible oxidation-reduction of methionine sulfoxide in proteins to methionine. The chain is Peptide methionine sulfoxide reductase MsrA from Chromobacterium violaceum (strain ATCC 12472 / DSM 30191 / JCM 1249 / CCUG 213 / NBRC 12614 / NCIMB 9131 / NCTC 9757 / MK).